Here is a 469-residue protein sequence, read N- to C-terminus: UDP-N-acetylmuramoylalanine--D-glutamate ligase (469 aa).

Residue 121–127 (GTNGKST) participates in ATP binding.

This sequence belongs to the MurCDEF family.

The protein resides in the cytoplasm. It catalyses the reaction UDP-N-acetyl-alpha-D-muramoyl-L-alanine + D-glutamate + ATP = UDP-N-acetyl-alpha-D-muramoyl-L-alanyl-D-glutamate + ADP + phosphate + H(+). Its pathway is cell wall biogenesis; peptidoglycan biosynthesis. Functionally, cell wall formation. Catalyzes the addition of glutamate to the nucleotide precursor UDP-N-acetylmuramoyl-L-alanine (UMA). The protein is UDP-N-acetylmuramoylalanine--D-glutamate ligase of Agrobacterium fabrum (strain C58 / ATCC 33970) (Agrobacterium tumefaciens (strain C58)).